Here is a 191-residue protein sequence, read N- to C-terminus: Imidazoleglycerol-phosphate dehydratase (191 aa).

This sequence belongs to the imidazoleglycerol-phosphate dehydratase family.

The protein localises to the cytoplasm. It catalyses the reaction D-erythro-1-(imidazol-4-yl)glycerol 3-phosphate = 3-(imidazol-4-yl)-2-oxopropyl phosphate + H2O. The protein operates within amino-acid biosynthesis; L-histidine biosynthesis; L-histidine from 5-phospho-alpha-D-ribose 1-diphosphate: step 6/9. The chain is Imidazoleglycerol-phosphate dehydratase from Methanococcoides burtonii (strain DSM 6242 / NBRC 107633 / OCM 468 / ACE-M).